The chain runs to 331 residues: Peroxidase 60 (331 aa).

The N-terminal stretch at 1-26 (MAVKISTIEVLILSLALLSFGHGCYG) is a signal peptide. Cystine bridges form between Cys37-Cys113, Cys70-Cys75, Cys119-Cys321, and Cys198-Cys230. The active-site Proton acceptor is His68. Asp69, Gly74, Asp76, and Ser78 together coordinate Ca(2+). Pro161 is a substrate binding site. Residue His191 participates in heme b binding. Thr192 provides a ligand contact to Ca(2+). N-linked (GlcNAc...) asparagine glycosylation occurs at Asn245. Positions 248 and 253 each coordinate Ca(2+).

Belongs to the peroxidase family. Classical plant (class III) peroxidase subfamily. The cofactor is heme b. Ca(2+) is required as a cofactor. In terms of tissue distribution, expressed in roots, slightly in leaves.

The protein resides in the secreted. The enzyme catalyses 2 a phenolic donor + H2O2 = 2 a phenolic radical donor + 2 H2O. Its function is as follows. Removal of H(2)O(2), oxidation of toxic reductants, biosynthesis and degradation of lignin, suberization, auxin catabolism, response to environmental stresses such as wounding, pathogen attack and oxidative stress. These functions might be dependent on each isozyme/isoform in each plant tissue. In Arabidopsis thaliana (Mouse-ear cress), this protein is Peroxidase 60 (PER60).